We begin with the raw amino-acid sequence, 131 residues long: CLAVATA3/ESR (CLE)-related protein ESR1 (131 aa).

Positions M1–A26 are cleaved as a signal peptide. The tract at residues R49 to Y131 is disordered. Residues P81 and P84 each carry the hydroxyproline modification. P84 is a glycosylation site (O-linked (Ara...) hydroxyproline).

This sequence belongs to the CLV3/ESR signal peptide family. Post-translationally, the O-glycosylation (arabinosylation) of the hydroxyproline Pro-84 enhances binding affinity of the ESR1p peptide for its receptor. As to expression, seed endosperm.

It is found in the secreted. The protein resides in the extracellular space. Functionally, extracellular signal peptide that regulates cell fate. The polypeptide is CLAVATA3/ESR (CLE)-related protein ESR1 (Zea mays (Maize)).